The chain runs to 819 residues: Phenylalanine--tRNA ligase beta subunit (819 aa).

The region spanning 42–154 is the tRNA-binding domain; sequence RGGLRGLVIG…SDAPVGMPAA (113 aa). The B5 domain occupies 412 to 488; the sequence is LKPHLISLSF…RIYGYNQVEL (77 aa). The Mg(2+) site is built by D466, D472, E475, and E476. Residues 726 to 819 enclose the FDX-ACB domain; the sequence is PRFPEVKRDL…LEQKLGAQLR (94 aa).

Belongs to the phenylalanyl-tRNA synthetase beta subunit family. Type 1 subfamily. As to quaternary structure, tetramer of two alpha and two beta subunits. It depends on Mg(2+) as a cofactor.

The protein resides in the cytoplasm. The enzyme catalyses tRNA(Phe) + L-phenylalanine + ATP = L-phenylalanyl-tRNA(Phe) + AMP + diphosphate + H(+). This chain is Phenylalanine--tRNA ligase beta subunit, found in Porphyromonas gingivalis (strain ATCC BAA-308 / W83).